The chain runs to 468 residues: Cell division protein FtsA (468 aa).

The interval 416-468 (NKKDTHENEVESSDEEIYQSEDNHQEHKQNHEHVQDKDKEESKFKKLMKSLFE) is disordered. Over residues 425 to 434 (VESSDEEIYQ) the composition is skewed to acidic residues. The span at 436–459 (EDNHQEHKQNHEHVQDKDKEESKF) shows a compositional bias: basic and acidic residues.

The protein belongs to the FtsA/MreB family. In terms of assembly, self-interacts. Interacts with FtsZ.

It is found in the cell membrane. Its function is as follows. Cell division protein that is involved in the assembly of the Z ring. May serve as a membrane anchor for the Z ring. This chain is Cell division protein FtsA, found in Staphylococcus aureus (strain MRSA252).